The primary structure comprises 466 residues: 3-isopropylmalate dehydratase large subunit (466 aa).

[4Fe-4S] cluster-binding residues include Cys347, Cys407, and Cys410.

The protein belongs to the aconitase/IPM isomerase family. LeuC type 1 subfamily. As to quaternary structure, heterodimer of LeuC and LeuD. [4Fe-4S] cluster serves as cofactor.

It carries out the reaction (2R,3S)-3-isopropylmalate = (2S)-2-isopropylmalate. It participates in amino-acid biosynthesis; L-leucine biosynthesis; L-leucine from 3-methyl-2-oxobutanoate: step 2/4. Catalyzes the isomerization between 2-isopropylmalate and 3-isopropylmalate, via the formation of 2-isopropylmaleate. This chain is 3-isopropylmalate dehydratase large subunit, found in Cronobacter sakazakii (strain ATCC BAA-894) (Enterobacter sakazakii).